The chain runs to 373 residues: Gametogenetin-binding protein 1 (373 aa).

Disordered regions lie at residues V26–T113 and K237–E268. Positions N36–E49 are enriched in polar residues. The interval L226–E373 is required for induction of mitochondrial fragmentation. The segment covering S254–E263 has biased composition (basic and acidic residues). The segment at K301–E373 is interaction with GGN.

As to quaternary structure, interacts with CCDC159. Interacts with GGN.

It localises to the cytoplasm. The protein resides in the membrane. Its subcellular location is the golgi apparatus. The protein localises to the mitochondrion intermembrane space. Induces mitochondrial fragmentation, possibly by promoting DNM1L-dependent fission and may play a role in mitochondrial morphogenesis during spermatogenesis. The sequence is that of Gametogenetin-binding protein 1 (Ggnbp1) from Rattus norvegicus (Rat).